The primary structure comprises 436 residues: Methylenetetrahydrofolate--tRNA-(uracil-5-)-methyltransferase TrmFO (436 aa).

Residue 9–14 (GAGLAG) coordinates FAD.

The protein belongs to the MnmG family. TrmFO subfamily. The cofactor is FAD.

The protein localises to the cytoplasm. It carries out the reaction uridine(54) in tRNA + (6R)-5,10-methylene-5,6,7,8-tetrahydrofolate + NADH + H(+) = 5-methyluridine(54) in tRNA + (6S)-5,6,7,8-tetrahydrofolate + NAD(+). It catalyses the reaction uridine(54) in tRNA + (6R)-5,10-methylene-5,6,7,8-tetrahydrofolate + NADPH + H(+) = 5-methyluridine(54) in tRNA + (6S)-5,6,7,8-tetrahydrofolate + NADP(+). Functionally, catalyzes the folate-dependent formation of 5-methyl-uridine at position 54 (M-5-U54) in all tRNAs. The polypeptide is Methylenetetrahydrofolate--tRNA-(uracil-5-)-methyltransferase TrmFO (Ligilactobacillus salivarius (strain UCC118) (Lactobacillus salivarius)).